A 136-amino-acid chain; its full sequence is Protein NrdI (136 aa).

This sequence belongs to the NrdI family.

In terms of biological role, probably involved in ribonucleotide reductase function. This is Protein NrdI from Salmonella dublin (strain CT_02021853).